The sequence spans 220 residues: GTP cyclohydrolase 1 (220 aa).

Cysteine 109, histidine 112, and cysteine 180 together coordinate Zn(2+).

It belongs to the GTP cyclohydrolase I family. In terms of assembly, toroid-shaped homodecamer, composed of two pentamers of five dimers.

The catalysed reaction is GTP + H2O = 7,8-dihydroneopterin 3'-triphosphate + formate + H(+). It participates in cofactor biosynthesis; 7,8-dihydroneopterin triphosphate biosynthesis; 7,8-dihydroneopterin triphosphate from GTP: step 1/1. This chain is GTP cyclohydrolase 1, found in Yersinia enterocolitica serotype O:8 / biotype 1B (strain NCTC 13174 / 8081).